The sequence spans 945 residues: Sensor kinase CckA (945 aa).

2 helical membrane passes run 111–131 (ALRL…YFLF) and 139–159 (FALV…FGAA). PAS domains lie at 171–212 (HQDL…TDAD), 313–341 (LDHA…EWLG), and 432–505 (AEVR…FAGQ). The 224-residue stretch at 574–797 (GIAHDFNNVL…TFKIFLPRLI (224 aa)) folds into the Histidine kinase domain. Residue H577 is modified to Phosphohistidine; by autocatalysis. The 117-residue stretch at 825–941 (TVLLVEDEDA…QLATTVKEML (117 aa)) folds into the Response regulatory domain. D876 carries the 4-aspartylphosphate modification.

The protein resides in the cell inner membrane. It catalyses the reaction ATP + protein L-histidine = ADP + protein N-phospho-L-histidine.. In terms of biological role, component of a regulatory phosphorelay system that controls B.abortus cell growth, division, and intracellular survival inside mammalian host cells. This signaling pathway is composed of CckA, ChpT, CtrA and CpdR. CckA autophosphorylates in the presence of ATP on a conserved His residue and transfers a phosphoryl group to a conserved Asp residue on its C-terminal receiver domain. CckA-P transfers phosphoryl groups to the ChpT phosphotransferase. The protein is Sensor kinase CckA of Brucella abortus (strain 2308).